Consider the following 153-residue polypeptide: Transcriptional repressor NrdR (153 aa).

Residues 3–34 (CPFCGKENTRVIDSRPADDCSSIRRRRQCDEC) fold into a zinc finger. Positions 49–139 (LVVIKKDNNR…VYREFKDVNT (91 aa)) constitute an ATP-cone domain.

Belongs to the NrdR family. Zn(2+) serves as cofactor.

Its function is as follows. Negatively regulates transcription of bacterial ribonucleotide reductase nrd genes and operons by binding to NrdR-boxes. The sequence is that of Transcriptional repressor NrdR from Lachnoclostridium phytofermentans (strain ATCC 700394 / DSM 18823 / ISDg) (Clostridium phytofermentans).